The following is a 466-amino-acid chain: Xanthine permease XanQ (466 aa).

Over 1-44 the chain is Cytoplasmic; it reads MSDINHAGSDLIFELEDRPPFHQALVGAITHLLAIFVPMVTPAL. A helical transmembrane segment spans residues 45-65; that stretch reads IVGAALQLSAETTAYLVSMAM. At 66 to 74 the chain is on the periplasmic side; that stretch reads IASGIGTWL. A helical membrane pass occupies residues 75 to 95; it reads QVNRYGIVGSGLLSIQSVNFS. Topologically, residues 96 to 99 are cytoplasmic; the sequence is FVTV. Residues 100–120 traverse the membrane as a helical segment; that stretch reads MIALGSSMKSDGFHEELIMSS. The Periplasmic segment spans residues 121-139; sequence LLGVSFVGAFLVVGSSFIL. Residues 140–160 traverse the membrane as a helical segment; the sequence is PYLRRVITPTVSGIVVLMIGL. Residues 161–170 are Cytoplasmic-facing; the sequence is SLIKVGIIDF. Residues 171 to 191 traverse the membrane as a helical segment; it reads GGGFAAKSSGTFGNYEHLGVG. Residues 192-199 lie on the Periplasmic side of the membrane; the sequence is LLVLIVVI. The chain crosses the membrane as a helical span at residues 200–220; that stretch reads GFNCCRSPLLRMGGIAIGLCV. The Cytoplasmic segment spans residues 221-229; it reads GYIASLCLG. Residues 230–250 traverse the membrane as a helical segment; sequence MVDFSSMRNLPLITIPHPFKY. The Periplasmic portion of the chain corresponds to 251–277; the sequence is GFSFSFHQFLVVGTIYLLSVLEAVGDI. Residues 278-298 traverse the membrane as a helical segment; that stretch reads TATAMVSRRPIQGEEYQSRLK. Over 299–317 the chain is Cytoplasmic; the sequence is GGVLADGLVSVIASAVGSL. A helical transmembrane segment spans residues 318–338; that stretch reads PLTTFAQNNGVIQMTGVASRY. Over 339 to 361 the chain is Periplasmic; the sequence is VGRTIAVMLVILGLFPMIGGFFT. The chain crosses the membrane as a helical span at residues 362–382; the sequence is TIPSAVLGGAMTLMFSMIAIA. Gly383 is a topological domain (cytoplasmic). Residues 384–403 form a helical membrane-spanning segment; the sequence is IRIIITNGLKRRETLIVATS. Over 404-444 the chain is Periplasmic; sequence LGLGLGVSYDPEIFKILPASIYVLVENPICAGGLTAILLNI. The chain crosses the membrane as a helical span at residues 445 to 465; sequence ILPGGYRQENVLPGITSAEEM. Residue Asp466 is a topological domain, cytoplasmic.

This sequence belongs to the nucleobase:cation symporter-2 (NCS2) (TC 2.A.40) family.

It is found in the cell inner membrane. The enzyme catalyses xanthine(in) + H(+)(in) = xanthine(out) + H(+)(out). Specific, proton motive force-dependent high-affinity transporter for xanthine. The sequence is that of Xanthine permease XanQ (xanQ) from Escherichia coli O157:H7.